Here is a 401-residue protein sequence, read N- to C-terminus: Imidazolonepropionase (401 aa).

Fe(3+)-binding residues include histidine 66 and histidine 68. Zn(2+) is bound by residues histidine 66 and histidine 68. 4-imidazolone-5-propanoate is bound by residues arginine 75, tyrosine 138, and histidine 171. Tyrosine 138 contacts N-formimidoyl-L-glutamate. Histidine 236 provides a ligand contact to Fe(3+). Zn(2+) is bound at residue histidine 236. A 4-imidazolone-5-propanoate-binding site is contributed by glutamine 239. A Fe(3+)-binding site is contributed by aspartate 311. Aspartate 311 provides a ligand contact to Zn(2+). 2 residues coordinate N-formimidoyl-L-glutamate: asparagine 313 and glycine 315. A 4-imidazolone-5-propanoate-binding site is contributed by threonine 316.

This sequence belongs to the metallo-dependent hydrolases superfamily. HutI family. Zn(2+) is required as a cofactor. Fe(3+) serves as cofactor.

It is found in the cytoplasm. The enzyme catalyses 4-imidazolone-5-propanoate + H2O = N-formimidoyl-L-glutamate. It participates in amino-acid degradation; L-histidine degradation into L-glutamate; N-formimidoyl-L-glutamate from L-histidine: step 3/3. In terms of biological role, catalyzes the hydrolytic cleavage of the carbon-nitrogen bond in imidazolone-5-propanoate to yield N-formimidoyl-L-glutamate. It is the third step in the universal histidine degradation pathway. This is Imidazolonepropionase from Acinetobacter baumannii (strain ACICU).